Consider the following 205-residue polypeptide: Methylthioribulose-1-phosphate dehydratase (205 aa).

Positions 96 and 98 each coordinate Zn(2+).

This sequence belongs to the aldolase class II family. MtnB subfamily. It depends on Zn(2+) as a cofactor.

The enzyme catalyses 5-(methylsulfanyl)-D-ribulose 1-phosphate = 5-methylsulfanyl-2,3-dioxopentyl phosphate + H2O. Its pathway is amino-acid biosynthesis; L-methionine biosynthesis via salvage pathway; L-methionine from S-methyl-5-thio-alpha-D-ribose 1-phosphate: step 2/6. Functionally, catalyzes the dehydration of methylthioribulose-1-phosphate (MTRu-1-P) into 2,3-diketo-5-methylthiopentyl-1-phosphate (DK-MTP-1-P). This chain is Methylthioribulose-1-phosphate dehydratase, found in Pseudomonas aeruginosa (strain UCBPP-PA14).